Consider the following 317-residue polypeptide: L-lactate dehydrogenase (317 aa).

Residues Val-17, Asp-38, Lys-43, Tyr-69, and 83 to 84 (GA) contribute to the NAD(+) site. Residues Gln-86 and Arg-92 each coordinate substrate. NAD(+)-binding positions include Ser-105, 122-124 (ATN), and Ser-147. Substrate is bound at residue 124-127 (NPVD). 152–155 (DTAR) contacts substrate. Positions 157 and 172 each coordinate beta-D-fructose 1,6-bisphosphate. The Proton acceptor role is filled by His-179. Position 224 is a phosphotyrosine (Tyr-224). Thr-233 provides a ligand contact to substrate.

Belongs to the LDH/MDH superfamily. LDH family. In terms of assembly, homotetramer.

It is found in the cytoplasm. It catalyses the reaction (S)-lactate + NAD(+) = pyruvate + NADH + H(+). It participates in fermentation; pyruvate fermentation to lactate; (S)-lactate from pyruvate: step 1/1. Allosterically activated by fructose 1,6-bisphosphate (FBP). Its function is as follows. Catalyzes the conversion of lactate to pyruvate. The polypeptide is L-lactate dehydrogenase (Bacillus caldotenax).